A 205-amino-acid polypeptide reads, in one-letter code: High frequency lysogenization protein HflD homolog (205 aa).

The protein belongs to the HflD family.

The protein localises to the cytoplasm. It localises to the cell inner membrane. The protein is High frequency lysogenization protein HflD homolog of Haemophilus influenzae (strain PittEE).